The chain runs to 428 residues: Glucose-1-phosphate adenylyltransferase (428 aa).

Alpha-D-glucose 1-phosphate is bound by residues Tyr-99, Gly-164, 179 to 180 (EK), and Ser-190.

The protein belongs to the bacterial/plant glucose-1-phosphate adenylyltransferase family. As to quaternary structure, homotetramer.

It carries out the reaction alpha-D-glucose 1-phosphate + ATP + H(+) = ADP-alpha-D-glucose + diphosphate. Its pathway is glycan biosynthesis; glycogen biosynthesis. Its function is as follows. Involved in the biosynthesis of ADP-glucose, a building block required for the elongation reactions to produce glycogen. Catalyzes the reaction between ATP and alpha-D-glucose 1-phosphate (G1P) to produce pyrophosphate and ADP-Glc. The chain is Glucose-1-phosphate adenylyltransferase from Thermomicrobium roseum (strain ATCC 27502 / DSM 5159 / P-2).